A 414-amino-acid chain; its full sequence is Mannan endo-1,4-beta-mannosidase 2 (414 aa).

Positions 1 to 25 (MAYFQRLISCIFVLFLLSLAFACEA) are cleaved as a signal peptide. Tryptophan 95 and asparagine 210 together coordinate substrate. Glutamate 211 (proton donor) is an active-site residue. Tyrosine 288 contributes to the substrate binding site. The Nucleophile role is filled by glutamate 328. Tryptophan 370 serves as a coordination point for substrate.

This sequence belongs to the glycosyl hydrolase 5 (cellulase A) family.

The protein localises to the secreted. The enzyme catalyses Random hydrolysis of (1-&gt;4)-beta-D-mannosidic linkages in mannans, galactomannans and glucomannans.. Its function is as follows. Possesses endo-beta-mannanase activity in vitro. May be involved in seed germination by weakening the endosperm cap prior to radicle emergence. This is Mannan endo-1,4-beta-mannosidase 2 (MAN2) from Solanum lycopersicum (Tomato).